Reading from the N-terminus, the 509-residue chain is ATP synthase subunit alpha (509 aa).

171–178 lines the ATP pocket; that stretch reads GDRQTGKT.

The protein belongs to the ATPase alpha/beta chains family. As to quaternary structure, F-type ATPases have 2 components, CF(1) - the catalytic core - and CF(0) - the membrane proton channel. CF(1) has five subunits: alpha(3), beta(3), gamma(1), delta(1), epsilon(1). CF(0) has three main subunits: a(1), b(2) and c(9-12). The alpha and beta chains form an alternating ring which encloses part of the gamma chain. CF(1) is attached to CF(0) by a central stalk formed by the gamma and epsilon chains, while a peripheral stalk is formed by the delta and b chains.

Its subcellular location is the cell inner membrane. The catalysed reaction is ATP + H2O + 4 H(+)(in) = ADP + phosphate + 5 H(+)(out). Produces ATP from ADP in the presence of a proton gradient across the membrane. The alpha chain is a regulatory subunit. This chain is ATP synthase subunit alpha, found in Neorickettsia sennetsu (strain ATCC VR-367 / Miyayama) (Ehrlichia sennetsu).